The sequence spans 135 residues: Protein PsiE homolog (135 aa).

4 helical membrane passes run V20–L40, Y54–V74, H82–V102, and P107–A127.

The protein belongs to the PsiE family.

The protein resides in the cell inner membrane. This chain is Protein PsiE homolog, found in Serratia proteamaculans (strain 568).